Consider the following 423-residue polypeptide: ATP-dependent Clp protease ATP-binding subunit ClpX (423 aa).

The region spanning 1-50 is the ClpX-type ZB domain; it reads MTDDTEYRCSFCGKEHHQVDDLIAGPDVRICSECVVLSCEIVEDRRNEAL. Zn(2+) is bound by residues Cys-9, Cys-12, Cys-31, and Cys-34. 126 to 133 contributes to the ATP binding site; it reads PTGCGKTY.

The protein belongs to the ClpX chaperone family. Component of the ClpX-ClpP complex. Forms a hexameric ring that, in the presence of ATP, binds to fourteen ClpP subunits assembled into a disk-like structure with a central cavity, resembling the structure of eukaryotic proteasomes.

In terms of biological role, ATP-dependent specificity component of the Clp protease. It directs the protease to specific substrates. Can perform chaperone functions in the absence of ClpP. This chain is ATP-dependent Clp protease ATP-binding subunit ClpX, found in Tropheryma whipplei (strain Twist) (Whipple's bacillus).